The chain runs to 191 residues: MEKGRIVLASASPRRLELLASAGVEFDVCASDIPEEPIPGEAPADFATRLARDKAVATAARTEGRWFVGADTIVVCAGEIMGKPVDEADAVRMLRKLSGVSHEVITGYAVYDRERDGLLCKAVVTKVVFKPLRDEEISAYVATGCPMDKAGAYAIQGGAAYMVERIDGSYTNVVGLPLCEVVEDLRRIGAL.

Asp71 (proton acceptor) is an active-site residue.

Belongs to the Maf family. YhdE subfamily. A divalent metal cation serves as cofactor.

The protein resides in the cytoplasm. It carries out the reaction dTTP + H2O = dTMP + diphosphate + H(+). The catalysed reaction is UTP + H2O = UMP + diphosphate + H(+). Its function is as follows. Nucleoside triphosphate pyrophosphatase that hydrolyzes dTTP and UTP. May have a dual role in cell division arrest and in preventing the incorporation of modified nucleotides into cellular nucleic acids. This is dTTP/UTP pyrophosphatase from Geobacter sulfurreducens (strain ATCC 51573 / DSM 12127 / PCA).